Reading from the N-terminus, the 281-residue chain is Lipoyl synthase (281 aa).

[4Fe-4S] cluster contacts are provided by cysteine 37, cysteine 42, cysteine 48, cysteine 63, cysteine 67, cysteine 70, and serine 274. One can recognise a Radical SAM core domain in the interval 49–263; that stretch reads WSRGTATFMI…RQQAVNKGFK (215 aa).

Belongs to the radical SAM superfamily. Lipoyl synthase family. [4Fe-4S] cluster is required as a cofactor.

The protein resides in the cytoplasm. The enzyme catalyses [[Fe-S] cluster scaffold protein carrying a second [4Fe-4S](2+) cluster] + N(6)-octanoyl-L-lysyl-[protein] + 2 oxidized [2Fe-2S]-[ferredoxin] + 2 S-adenosyl-L-methionine + 4 H(+) = [[Fe-S] cluster scaffold protein] + N(6)-[(R)-dihydrolipoyl]-L-lysyl-[protein] + 4 Fe(3+) + 2 hydrogen sulfide + 2 5'-deoxyadenosine + 2 L-methionine + 2 reduced [2Fe-2S]-[ferredoxin]. It participates in protein modification; protein lipoylation via endogenous pathway; protein N(6)-(lipoyl)lysine from octanoyl-[acyl-carrier-protein]: step 2/2. Catalyzes the radical-mediated insertion of two sulfur atoms into the C-6 and C-8 positions of the octanoyl moiety bound to the lipoyl domains of lipoate-dependent enzymes, thereby converting the octanoylated domains into lipoylated derivatives. The polypeptide is Lipoyl synthase (Parabacteroides distasonis (strain ATCC 8503 / DSM 20701 / CIP 104284 / JCM 5825 / NCTC 11152)).